The following is a 228-amino-acid chain: Thermonuclease (228 aa).

The signal sequence occupies residues 1-23 (MTEYLLSAGICMAIVSILLIGMA). The propeptide occupies 24–60 (ISNVSKGQYAKRFFFFATSCLVLTLVVVSSLSSSANA). Residue aspartate 100 coordinates Ca(2+). Arginine 114 is an active-site residue. Aspartate 119 and threonine 120 together coordinate Ca(2+). Active-site residues include glutamate 122 and arginine 166.

Belongs to the thermonuclease family. Requires Ca(2+) as cofactor.

It localises to the secreted. It carries out the reaction Endonucleolytic cleavage to nucleoside 3'-phosphates and 3'-phosphooligonucleotide end-products.. Enzyme that catalyzes the hydrolysis of both DNA and RNA at the 5' position of the phosphodiester bond. In Staphylococcus aureus (strain MSSA476), this protein is Thermonuclease (nuc).